The following is a 156-amino-acid chain: MLTHLDSQGRANMVDVTEKAVTEREATAEARVRMLPQTLQMIVEGEHPKGDVFAVARIAGIQAAKKTSDLIPLCHPLMLTSVKVELSAEGTDAVRIVARCKLAGQTGVEMEALTAASVAALTIYDMCKAVDKGMVIEQVRLLEKLGGKSGHYKVDA.

Substrate is bound by residues 73–75 (LCH) and 110–111 (ME). Asp125 is a catalytic residue.

It belongs to the MoaC family. In terms of assembly, homohexamer; trimer of dimers.

The catalysed reaction is (8S)-3',8-cyclo-7,8-dihydroguanosine 5'-triphosphate = cyclic pyranopterin phosphate + diphosphate. It functions in the pathway cofactor biosynthesis; molybdopterin biosynthesis. Its function is as follows. Catalyzes the conversion of (8S)-3',8-cyclo-7,8-dihydroguanosine 5'-triphosphate to cyclic pyranopterin monophosphate (cPMP). The sequence is that of Cyclic pyranopterin monophosphate synthase from Pseudomonas putida (strain W619).